The following is a 317-amino-acid chain: Ribosomal protein L11 methyltransferase (317 aa).

Residues Thr158, Gly179, Asp201, and Asn244 each contribute to the S-adenosyl-L-methionine site.

Belongs to the methyltransferase superfamily. PrmA family.

The protein resides in the cytoplasm. The catalysed reaction is L-lysyl-[protein] + 3 S-adenosyl-L-methionine = N(6),N(6),N(6)-trimethyl-L-lysyl-[protein] + 3 S-adenosyl-L-homocysteine + 3 H(+). Methylates ribosomal protein L11. The chain is Ribosomal protein L11 methyltransferase from Streptococcus pyogenes serotype M5 (strain Manfredo).